Reading from the N-terminus, the 100-residue chain is MARKSLIQREKKRQKLEQKYHSIRRSSKKEISKVPSLSDKWEIYGKLQSLPRNSAPTRLHRRCFLTGRPRANYRDFGLSGHILREMVHACLLPGATRSSW.

Residues Met1–Ile31 form a disordered region.

Belongs to the universal ribosomal protein uS14 family. In terms of assembly, part of the 30S ribosomal subunit.

It localises to the plastid. Its subcellular location is the chloroplast. Its function is as follows. Binds 16S rRNA, required for the assembly of 30S particles. This chain is Small ribosomal subunit protein uS14c, found in Solanum bulbocastanum (Wild potato).